A 276-amino-acid chain; its full sequence is Large ribosomal subunit protein uL2 (276 aa).

Positions 221–276 (RGSVMNPNDHPHGGGEGRAPIGRKAPVTPWGKPTLGLKTRKKKNKSDQYIIRRRKK) are disordered.

It belongs to the universal ribosomal protein uL2 family. In terms of assembly, part of the 50S ribosomal subunit. Forms a bridge to the 30S subunit in the 70S ribosome.

Its function is as follows. One of the primary rRNA binding proteins. Required for association of the 30S and 50S subunits to form the 70S ribosome, for tRNA binding and peptide bond formation. It has been suggested to have peptidyltransferase activity; this is somewhat controversial. Makes several contacts with the 16S rRNA in the 70S ribosome. In Brevibacillus brevis (strain 47 / JCM 6285 / NBRC 100599), this protein is Large ribosomal subunit protein uL2.